The chain runs to 918 residues: MEHGTLLAQPGLWTRDTSWALLYFLCYILPQTAPQVLRIGGIFETVENEPVNVEELAFKFAVTSINRNRTLMPNTTLTYDIQRINLFDSFEASRRACDQLALGVAALFGPSHSSSVSAVQSICNALEVPHIQTRWKHPSVDNKDLFYINLYPDYAAISRAILDLVLYYNWKTVTVVYEDSTGLIRLQELIKAPSRYNIKIKIRQLPSGNKDAKPLLKEMKKGKEFYVIFDCSHETAAEILKQILFMGMMTEYYHYFFTTLDLFALDLELYRYSGVNMTGFRLLNIDNPHVSSIIEKWSMERLQAPPRPETGLLDGMMTTEAALMYDAVYMVAIASHRASQLTVSSLQCHRHKPWRLGPRFMNLIKEARWDGLTGHITFNKTNGLRKDFDLDIISLKEEGTEKAAGEVSKHLYKVWKKIGIWNSNSGLNMTDSNKDKSSNITDSLANRTLIVTTILEEPYVMYRKSDKPLYGNDRFEGYCLDLLKELSNILGFIYDVKLVPDGKYGAQNDKGEWNGMVKELIDHRADLAVAPLTITYVREKVIDFSKPFMTLGISILYRKPNGTNPGVFSFLNPLSPDIWMYVLLACLGVSCVLFVIARFTPYEWYNPHPCNPDSDVVENNFTLLNSFWFGVGALMQQGSELMPKALSTRIVGGIWWFFTLIIISSYTANLAAFLTVERMESPIDSADDLAKQTKIEYGAVRDGSTMTFFKKSKISTYEKMWAFMSSRQQTALVRNSDEGIQRVLTTDYALLMESTSIEYVTQRNCNLTQIGGLIDSKGYGVGTPIGSPYRDKITIAILQLQEEGKLHMMKEKWWRGNGCPEEDNKEASALGVENIGGIFIVLAAGLVLSVFVAIGEFIYKSRKNNDIEQAFCFFYGLQCKQTHPTNSTSGTTLSTDLECGKLIREERGIRKQSSVHTV.

An N-terminal signal peptide occupies residues 1 to 30 (MEHGTLLAQPGLWTRDTSWALLYFLCYILP). Over 31-576 (QTAPQVLRIG…VFSFLNPLSP (546 aa)) the chain is Extracellular. Residues N68, N74, N276, N379, N428, N439, and N446 are each glycosylated (N-linked (GlcNAc...) asparagine). Residues P531, T533, and R538 each coordinate L-glutamate. N-linked (GlcNAc...) asparagine glycosylation occurs at N561. Residues 577-597 (DIWMYVLLACLGVSCVLFVIA) traverse the membrane as a helical segment. The Cytoplasmic segment spans residues 598 to 653 (RFTPYEWYNPHPCNPDSDVVENNFTLLNSFWFGVGALMQQGSELMPKALSTRIVGG). Residues 654–674 (IWWFFTLIIISSYTANLAAFL) form a helical membrane-spanning segment. Over 675–834 (TVERMESPID…KEASALGVEN (160 aa)) the chain is Extracellular. Positions 704 and 705 each coordinate L-glutamate. Position 725 is a phosphoserine; by PKC (S725). Residue E753 coordinates L-glutamate. T761 is modified (phosphothreonine; by PKC). C765 and C819 form a disulfide bridge. A glycan (N-linked (GlcNAc...) asparagine) is linked at N766. A helical transmembrane segment spans residues 835–855 (IGGIFIVLAAGLVLSVFVAIG). At 856–918 (EFIYKSRKNN…IRKQSSVHTV (63 aa)) the chain is on the cytoplasmic side.

Belongs to the glutamate-gated ion channel (TC 1.A.10.1) family. GRIK1 subfamily. In terms of assembly, homotetramer or heterotetramer of pore-forming glutamate receptor subunits. Tetramers may be formed by the dimerization of dimers. Can form functional heteromeric receptors with GRIK5. Can form functional heteromeric receptors with GRIK4. Interacts with KLHL17.

The protein resides in the cell membrane. It localises to the postsynaptic cell membrane. It catalyses the reaction Ca(2+)(in) = Ca(2+)(out). Its function is as follows. Ionotropic glutamate receptor that functions as a cation-permeable ligand-gated ion channel, gated by L-glutamate and the glutamatergic agonist kainic acid. L-glutamate acts as an excitatory neurotransmitter at many synapses in the central nervous system. Binding of the excitatory neurotransmitter L-glutamate induces a conformation change, leading to the opening of the cation channel, and thereby converts the chemical signal to an electrical impulse. The receptor then desensitizes rapidly and enters a transient inactive state, characterized by the presence of bound agonist. Functionally, ionotropic glutamate receptor that functions as a cation-permeable ligand-gated ion channel, gated by L-glutamate and the glutamatergic agonist kainic acid. In Homo sapiens (Human), this protein is Glutamate receptor ionotropic, kainate 1 (GRIK1).